The sequence spans 699 residues: Elongation factor G (699 aa).

The tr-type G domain maps to Glu8–Ile283. GTP contacts are provided by residues Ala17–Thr24, Asp81–His85, and Asn135–Asp138.

This sequence belongs to the TRAFAC class translation factor GTPase superfamily. Classic translation factor GTPase family. EF-G/EF-2 subfamily.

The protein localises to the cytoplasm. In terms of biological role, catalyzes the GTP-dependent ribosomal translocation step during translation elongation. During this step, the ribosome changes from the pre-translocational (PRE) to the post-translocational (POST) state as the newly formed A-site-bound peptidyl-tRNA and P-site-bound deacylated tRNA move to the P and E sites, respectively. Catalyzes the coordinated movement of the two tRNA molecules, the mRNA and conformational changes in the ribosome. This is Elongation factor G (fusA) from Rickettsia prowazekii (strain Madrid E).